The following is a 44-amino-acid chain: Photosystem II reaction center protein K (44 aa).

A propeptide spanning residues 1-7 is cleaved from the precursor; that stretch reads MESLLLA. Residues 23–43 traverse the membrane as a helical segment; that stretch reads FPVIPVFFLLLAFVWQAAVGF.

Belongs to the PsbK family. PSII is composed of 1 copy each of membrane proteins PsbA, PsbB, PsbC, PsbD, PsbE, PsbF, PsbH, PsbI, PsbJ, PsbK, PsbL, PsbM, PsbT, PsbX, PsbY, PsbZ, Psb30/Ycf12, at least 3 peripheral proteins of the oxygen-evolving complex and a large number of cofactors. It forms dimeric complexes.

The protein localises to the plastid. It is found in the chloroplast thylakoid membrane. In terms of biological role, one of the components of the core complex of photosystem II (PSII). PSII is a light-driven water:plastoquinone oxidoreductase that uses light energy to abstract electrons from H(2)O, generating O(2) and a proton gradient subsequently used for ATP formation. It consists of a core antenna complex that captures photons, and an electron transfer chain that converts photonic excitation into a charge separation. In Thalassiosira pseudonana (Marine diatom), this protein is Photosystem II reaction center protein K.